The following is a 746-amino-acid chain: Alpha-1,4-glucan:maltose-1-phosphate maltosyltransferase (746 aa).

Residues 1–43 are disordered; that stretch reads MAAVQHRATTRTSNTDNSTTKTKSKATSARKSPATKRKRVSAE. A compositionally biased stretch (low complexity) spans 10 to 32; sequence TRTSNTDNSTTKTKSKATSARKS. Alpha-maltose 1-phosphate-binding residues include K343, Q403, and D438. D473 acts as the Nucleophile in catalysis. N474 serves as a coordination point for alpha-maltose 1-phosphate. E502 acts as the Proton donor in catalysis. Position 612–613 (612–613) interacts with alpha-maltose 1-phosphate; the sequence is KY.

The protein belongs to the glycosyl hydrolase 13 family. GlgE subfamily. As to quaternary structure, homodimer.

It catalyses the reaction alpha-maltose 1-phosphate + [(1-&gt;4)-alpha-D-glucosyl](n) = [(1-&gt;4)-alpha-D-glucosyl](n+2) + phosphate. Maltosyltransferase that uses maltose 1-phosphate (M1P) as the sugar donor to elongate linear or branched alpha-(1-&gt;4)-glucans. Is involved in a branched alpha-glucan biosynthetic pathway from trehalose, together with TreS, Mak and GlgB. This is Alpha-1,4-glucan:maltose-1-phosphate maltosyltransferase from Bifidobacterium longum (strain NCC 2705).